Reading from the N-terminus, the 366-residue chain is 3-dehydroquinate synthase (366 aa).

Residues 73–78, 107–111, 131–132, K144, and K153 each bind NAD(+); these read DGERAK, GVVGD, and TT. The Zn(2+) site is built by E186, H249, and H266.

It belongs to the sugar phosphate cyclases superfamily. Dehydroquinate synthase family. Co(2+) is required as a cofactor. Zn(2+) serves as cofactor. It depends on NAD(+) as a cofactor.

Its subcellular location is the cytoplasm. The enzyme catalyses 7-phospho-2-dehydro-3-deoxy-D-arabino-heptonate = 3-dehydroquinate + phosphate. Its pathway is metabolic intermediate biosynthesis; chorismate biosynthesis; chorismate from D-erythrose 4-phosphate and phosphoenolpyruvate: step 2/7. Functionally, catalyzes the conversion of 3-deoxy-D-arabino-heptulosonate 7-phosphate (DAHP) to dehydroquinate (DHQ). This is 3-dehydroquinate synthase from Koribacter versatilis (strain Ellin345).